The following is a 374-amino-acid chain: Polar flagellin E (374 aa).

The stretch at 102 to 126 (SHEQDDRKSLQQEVIALQDELDRVA) forms a coiled coil.

It belongs to the bacterial flagellin family. In terms of assembly, heteromer of multiple flagellin subunits including FlaA, FlaB/D, FlaC, FlaE and FlaF.

Its subcellular location is the secreted. It is found in the bacterial flagellum. Flagellin is the subunit protein which polymerizes to form the filaments of bacterial flagella. This Vibrio parahaemolyticus serotype O3:K6 (strain RIMD 2210633) protein is Polar flagellin E (flaE).